A 947-amino-acid polypeptide reads, in one-letter code: Bifunctional glutamine synthetase adenylyltransferase/adenylyl-removing enzyme (947 aa).

Residues 1–440 are adenylyl removase; sequence MTPLSSPLSQ…VFNELIGDDE (440 aa). Residues 450-947 are adenylyl transferase; that stretch reads SEPWREVWQD…ASWRKWLVAV (498 aa).

Belongs to the GlnE family. Requires Mg(2+) as cofactor.

It catalyses the reaction [glutamine synthetase]-O(4)-(5'-adenylyl)-L-tyrosine + phosphate = [glutamine synthetase]-L-tyrosine + ADP. It carries out the reaction [glutamine synthetase]-L-tyrosine + ATP = [glutamine synthetase]-O(4)-(5'-adenylyl)-L-tyrosine + diphosphate. Involved in the regulation of glutamine synthetase GlnA, a key enzyme in the process to assimilate ammonia. When cellular nitrogen levels are high, the C-terminal adenylyl transferase (AT) inactivates GlnA by covalent transfer of an adenylyl group from ATP to specific tyrosine residue of GlnA, thus reducing its activity. Conversely, when nitrogen levels are low, the N-terminal adenylyl removase (AR) activates GlnA by removing the adenylyl group by phosphorolysis, increasing its activity. The regulatory region of GlnE binds the signal transduction protein PII (GlnB) which indicates the nitrogen status of the cell. The polypeptide is Bifunctional glutamine synthetase adenylyltransferase/adenylyl-removing enzyme (Salmonella gallinarum (strain 287/91 / NCTC 13346)).